The following is a 49-amino-acid chain: Large ribosomal subunit protein bL33 (49 aa).

It belongs to the bacterial ribosomal protein bL33 family.

In Desulforamulus reducens (strain ATCC BAA-1160 / DSM 100696 / MI-1) (Desulfotomaculum reducens), this protein is Large ribosomal subunit protein bL33.